The sequence spans 122 residues: Small ribosomal subunit protein uS13 (122 aa).

The disordered stretch occupies residues 97 to 122 (PVRGQRTHTNARTRKGPAKAIAGKKK).

The protein belongs to the universal ribosomal protein uS13 family. As to quaternary structure, part of the 30S ribosomal subunit. Forms a loose heterodimer with protein S19. Forms two bridges to the 50S subunit in the 70S ribosome.

Its function is as follows. Located at the top of the head of the 30S subunit, it contacts several helices of the 16S rRNA. In the 70S ribosome it contacts the 23S rRNA (bridge B1a) and protein L5 of the 50S subunit (bridge B1b), connecting the 2 subunits; these bridges are implicated in subunit movement. Contacts the tRNAs in the A and P-sites. This Rhizobium rhizogenes (strain K84 / ATCC BAA-868) (Agrobacterium radiobacter) protein is Small ribosomal subunit protein uS13.